The primary structure comprises 108 residues: MTRKIFTNTRERWRQQSVNNAFAKLRKLIPTHPPDKKLSKNETLRLAMRYINFLVKVLGEQSLHQTGVAAQGNILGLFPPKTRLPDEDDRTLLNDYRVPSPGPSHGAP.

Residues Thr-2 to Leu-54 enclose the bHLH domain. Residues Gly-76–Pro-108 are disordered.

This is T-cell acute lymphocytic leukemia protein 2 homolog (Tal2) from Mus musculus (Mouse).